Reading from the N-terminus, the 339-residue chain is Ketol-acid reductoisomerase (NADP(+)) (339 aa).

The KARI N-terminal Rossmann domain occupies Met-1 to Thr-182. NADP(+) contacts are provided by residues Tyr-24–Gln-27, Arg-48, Ser-51, Ser-53, and Asp-83–Gln-86. His-108 is a catalytic residue. Residue Gly-134 participates in NADP(+) binding. Residues Thr-183–Ile-328 enclose the KARI C-terminal knotted domain. Residues Asp-191, Glu-195, Glu-227, and Glu-231 each contribute to the Mg(2+) site. Ser-252 lines the substrate pocket.

This sequence belongs to the ketol-acid reductoisomerase family. Mg(2+) serves as cofactor.

The enzyme catalyses (2R)-2,3-dihydroxy-3-methylbutanoate + NADP(+) = (2S)-2-acetolactate + NADPH + H(+). It carries out the reaction (2R,3R)-2,3-dihydroxy-3-methylpentanoate + NADP(+) = (S)-2-ethyl-2-hydroxy-3-oxobutanoate + NADPH + H(+). It participates in amino-acid biosynthesis; L-isoleucine biosynthesis; L-isoleucine from 2-oxobutanoate: step 2/4. It functions in the pathway amino-acid biosynthesis; L-valine biosynthesis; L-valine from pyruvate: step 2/4. Involved in the biosynthesis of branched-chain amino acids (BCAA). Catalyzes an alkyl-migration followed by a ketol-acid reduction of (S)-2-acetolactate (S2AL) to yield (R)-2,3-dihydroxy-isovalerate. In the isomerase reaction, S2AL is rearranged via a Mg-dependent methyl migration to produce 3-hydroxy-3-methyl-2-ketobutyrate (HMKB). In the reductase reaction, this 2-ketoacid undergoes a metal-dependent reduction by NADPH to yield (R)-2,3-dihydroxy-isovalerate. The sequence is that of Ketol-acid reductoisomerase (NADP(+)) from Bradyrhizobium sp. (strain ORS 278).